The primary structure comprises 243 residues: Adenosylcobinamide-GDP ribazoletransferase (243 aa).

A run of 5 helical transmembrane segments spans residues 31–48, 61–81, 109–129, 134–154, and 188–208; these read LLFYPLVGLLFGVLLWVL, AALLLTAWVLLSGGLHLDGLA, IAVVTLVLVLLLKFTALVALI, GFALLLAPLIGRGALLGLFLC, and LLLGGYSGLWAVLLATVLFFW.

It belongs to the CobS family. Requires Mg(2+) as cofactor.

Its subcellular location is the cell inner membrane. The enzyme catalyses alpha-ribazole + adenosylcob(III)inamide-GDP = adenosylcob(III)alamin + GMP + H(+). It carries out the reaction alpha-ribazole 5'-phosphate + adenosylcob(III)inamide-GDP = adenosylcob(III)alamin 5'-phosphate + GMP + H(+). It functions in the pathway cofactor biosynthesis; adenosylcobalamin biosynthesis; adenosylcobalamin from cob(II)yrinate a,c-diamide: step 7/7. Joins adenosylcobinamide-GDP and alpha-ribazole to generate adenosylcobalamin (Ado-cobalamin). Also synthesizes adenosylcobalamin 5'-phosphate from adenosylcobinamide-GDP and alpha-ribazole 5'-phosphate. The polypeptide is Adenosylcobinamide-GDP ribazoletransferase (Pseudomonas fluorescens (strain ATCC BAA-477 / NRRL B-23932 / Pf-5)).